The following is a 546-amino-acid chain: Major facilitator superfamily transporter MPN_077 (546 aa).

The next 12 membrane-spanning stretches (helical) occupy residues 2–22, 62–82, 88–108, 179–199, 220–240, 248–268, 305–325, 344–364, 377–397, 401–421, 442–462, and 485–505; these read WGLV…IDFI, WTIT…VVKF, VMIM…GSPL, AFFI…IAYA, FWGF…PGVG, VWVV…FAWF, LLAI…QTWF, PILL…LSPF, FIFT…ATLG, VVGF…GWSL, IIFG…DIIT, and IAAI…IIYL.

This sequence belongs to the major facilitator superfamily.

The protein localises to the cell membrane. In Mycoplasma pneumoniae (strain ATCC 29342 / M129 / Subtype 1) (Mycoplasmoides pneumoniae), this protein is Major facilitator superfamily transporter MPN_077.